The following is a 231-amino-acid chain: UMP-CMP kinase (231 aa).

An ATP-binding site is contributed by 57–62 (GSGKGT). Residues 77–106 (SAGDLLRREIASGSAYGSVILSTIREGKIV) form an NMP region. A ribonucleoside 5'-phosphate-binding positions include arginine 83, 104–106 (KIV), and 131–134 (GFPR). Asparagine 138 contributes to the CMP binding site. The tract at residues 169 to 177 (NRNQGRVDD) is LID. Arginine 170 is a binding site for ATP. A ribonucleoside 5'-phosphate contacts are provided by arginine 174 and arginine 185. Residue glycine 213 coordinates ATP.

It belongs to the adenylate kinase family. UMP-CMP kinase subfamily. As to quaternary structure, monomer. The cofactor is Mg(2+).

It localises to the cytoplasm. Its subcellular location is the nucleus. The enzyme catalyses CMP + ATP = CDP + ADP. It catalyses the reaction dCMP + ATP = dCDP + ADP. The catalysed reaction is UMP + ATP = UDP + ADP. Its function is as follows. Catalyzes the phosphorylation of pyrimidine nucleoside monophosphates at the expense of ATP. Plays an important role in de novo pyrimidine nucleotide biosynthesis. Has preference for UMP and CMP as phosphate acceptors. The protein is UMP-CMP kinase of Prunus armeniaca (Apricot).